Here is an 856-residue protein sequence, read N- to C-terminus: Facilitated trehalose transporter Tret1 (856 aa).

Disordered stretches follow at residues 1–27 (MSGRDNRGAGGGGGGHQPLSNAMGKLK) and 62–202 (DPFL…KATS). Over 1-389 (MSGRDNRGAG…LEVYRPTTNP (389 aa)) the chain is Cytoplasmic. The segment covering 69–80 (VSPQRHPQTVRT) has biased composition (polar residues). A compositionally biased stretch (basic and acidic residues) spans 133–142 (EIREHRDRQQ). Polar residues predominate over residues 170 to 180 (GNSNTNNNKAA). Phosphoserine is present on residues serine 247, serine 248, serine 249, serine 319, and serine 321. A disordered region spans residues 326–345 (LTSRQHFQQQRSISTDSRKS). The segment covering 329-340 (RQHFQQQRSIST) has biased composition (polar residues). A helical transmembrane segment spans residues 390-410 (IFIWTQVLAALSVSLGSLVVG). At 411–439 (FVSAYTSPALVSMTDRNITSFEVTQDAGS) the chain is on the extracellular side. The N-linked (GlcNAc...) asparagine glycan is linked to asparagine 427. A helical transmembrane segment spans residues 440-460 (WVGGIMPLAGLAGGIAGGPLI). Residues 461-472 (EYLGRRNTILAT) lie on the Cytoplasmic side of the membrane. The helical transmembrane segment at 473–493 (AVPFIVSSLLIACAVNVAMVL) threads the bilayer. Residues 494 to 496 (CGR) lie on the Extracellular side of the membrane. A helical membrane pass occupies residues 497-517 (FLAGFCVGIASLSLPVYLGET). The Cytoplasmic portion of the chain corresponds to 518–527 (VQPEVRGTLG). Residues 528 to 548 (LLPTAFGNIGILLCFVAGSFM) traverse the membrane as a helical segment. Asparagine 549 carries an N-linked (GlcNAc...) asparagine glycan. Over 549–551 (NWS) the chain is Extracellular. A helical membrane pass occupies residues 552–572 (MLAFLGAALPVPFLILMFLIP). At 573-635 (ETPRWFVSRG…ELLKRNNLKP (63 aa)) the chain is on the cytoplasmic side. Residues 636–656 (LSISLGLMFFQQLSGINAVIF) traverse the membrane as a helical segment. Residues 657-672 (YTVQIFKDAGSTIDGN) lie on the Extracellular side of the membrane. A helical transmembrane segment spans residues 673–693 (ICTIIVGVVNFLATFIGIVLI). Over 694 to 699 (DRAGRK) the chain is Cytoplasmic. Residues 700–720 (ILLYVSNIAMILTLFVLGGFF) traverse the membrane as a helical segment. Residues 721–739 (YCKAHGPDVSNLGWLPLTC) lie on the Extracellular side of the membrane. Residues 740–760 (FVIYILGFSLGFGPIPWLMMG) form a helical membrane-spanning segment. Over 761–766 (EILPAK) the chain is Cytoplasmic. Residues 767–787 (IRGSAASVATAFNWSCTFVVT) traverse the membrane as a helical segment. Over 788–800 (KTFQDLTVAMGAH) the chain is Extracellular. Residues 801-821 (GAFWLFGAICFVGLFFVIIYV) form a helical membrane-spanning segment. Residues 822–856 (PETQGKTLEDIERKMMGRVRRMSSVANIKPLSFNM) are Cytoplasmic-facing. A phosphoserine mark is found at serine 844 and serine 845.

Belongs to the major facilitator superfamily. Sugar transporter (TC 2.A.1.1) family. Trehalose transporter subfamily.

The protein localises to the cell membrane. Functionally, low-capacity facilitative transporter for trehalose. Does not transport maltose, sucrose or lactose. Mediates the bidirectional transfer of trehalose. Responsible for the transport of trehalose synthesized in the fat body and the incorporation of trehalose into other tissues that require a carbon source, thereby regulating trehalose levels in the hemolymph. This is Facilitated trehalose transporter Tret1 from Drosophila erecta (Fruit fly).